Here is a 171-residue protein sequence, read N- to C-terminus: Ly6/PLAUR domain-containing protein 6 (171 aa).

Residues 1–25 (MEPSPALAWLLLLSLVADCLKAAQS) form the signal peptide. A UPAR/Ly6 domain is found at 47 to 141 (FKCFTCEKAA…PRNETDATFA (95 aa)). Disulfide bonds link cysteine 49–cysteine 77, cysteine 52–cysteine 61, cysteine 70–cysteine 96, cysteine 102–cysteine 121, cysteine 107–cysteine 118, and cysteine 122–cysteine 127. Residues 88–90 (NSI) carry the NxI motif motif. N-linked (GlcNAc...) asparagine glycosylation is found at asparagine 134 and asparagine 147. A lipid anchor (GPI-anchor amidated asparagine) is attached at asparagine 147. The propeptide at 148–171 (QTNGHPHCVSVIVSCLWVWLGLTL) is removed in mature form.

Interacts with nicotinic acetylcholine receptors (nAChRs) including CHRNA3, CHRNA4, CHRNA5, CHRNA6, CHRNA7, CHRNB2 and CHRNB4. Interacts (via NxI motif) with LRP6. As to expression, detected in the frontal cortex and hippocampus (at protein level). Highly expressed in the brain and spinal cord, as well as dorsal root and trigeminal ganglia.

It is found in the secreted. Its subcellular location is the cytoplasm. It localises to the cell membrane. The protein resides in the synapse. The protein localises to the synaptosome. It is found in the membrane raft. Its subcellular location is the cell projection. It localises to the dendrite. The protein resides in the perikaryon. Acts as a modulator of nicotinic acetylcholine receptors (nAChRs) function in the brain. Inhibits nicotine-induced Ca(2+) influx through nAChRs. In vitro, specifically inhibits alpha-3:beta-4 and alpha-7 nAChR currents in an allosteric manner. Acts as a positive regulator of Wnt/beta-catenin signaling. This chain is Ly6/PLAUR domain-containing protein 6 (Lypd6), found in Mus musculus (Mouse).